A 295-amino-acid chain; its full sequence is GDP-polyphosphate phosphotransferase (295 aa).

The tract at residues 1-28 is disordered; it reads MDIPSVDVSTATNDGASSRAKGHRSAAP. Residues 7–16 are compositionally biased toward polar residues; the sequence is DVSTATNDGA. Residues H115 and H247 each carry the phosphohistidine modification.

The protein belongs to the polyphosphate kinase 2 (PPK2) family. Class I subfamily. In terms of assembly, interacts with Ndk. Autophosphorylated at His-115 and His-247 using polyP as a phosphate donor.

It carries out the reaction [phosphate](n) + GTP = [phosphate](n+1) + GDP. Uses inorganic polyphosphate (polyP) as a donor to convert GDP to GTP. In addition, modulates nucleotide triphosphate synthesis catalyzed by the nucleoside diphosphate kinase (Ndk) in favor of GTP production over CTP or UTP. Plays an important role in survival of M.tuberculosis in macrophages. The chain is GDP-polyphosphate phosphotransferase from Mycobacterium tuberculosis (strain ATCC 25618 / H37Rv).